The sequence spans 1040 residues: Multidrug resistance protein MdtB (1040 aa).

The next 12 helical transmembrane spans lie at 25–45 (LLMV…PVSA), 347–367 (LMMA…NIPA), 369–389 (IIPG…MVFL), 396–416 (LTLM…IVVI), 440–460 (IGFT…PLLF), 472–492 (FAIT…TLTP), 537–557 (WLTL…WVFI), 863–883 (LGST…VLGI), 888–908 (FIHP…ALLA), 911–931 (IAGS…IGIV), 968–988 (ILMT…STGV), and 998–1018 (IGMV…TPVI).

The protein belongs to the resistance-nodulation-cell division (RND) (TC 2.A.6) family. MdtB subfamily. In terms of assembly, part of a tripartite efflux system composed of MdtA, MdtB and MdtC. MdtB forms a heteromultimer with MdtC.

The protein resides in the cell inner membrane. In terms of biological role, the MdtABC tripartite complex confers resistance against novobiocin and deoxycholate. This chain is Multidrug resistance protein MdtB, found in Escherichia coli O127:H6 (strain E2348/69 / EPEC).